Reading from the N-terminus, the 758-residue chain is Spastin (758 aa).

The segment at 1–99 (MVRTKNQSSS…PTTCSPRSGH (99 aa)) is disordered. Residues 1 to 121 (MVRTKNQSSS…KQNLYVVSFP (121 aa)) lie on the Cytoplasmic side of the membrane. The interval 1–210 (MVRTKNQSSS…RPIQPLEMAA (210 aa)) is required for localization to punctate cytoplasmic foci. 4 stretches are compositionally biased toward low complexity: residues 8 to 29 (SSSSSASSSSTKSPIKSSSATG), 43 to 58 (RSSSASNVAAVVAGGS), 66 to 76 (SSNRRSPGSSP), and 85 to 95 (TDDLTPTTCSP). An intramembrane region (helical) is located at residues 122-142 (IIFLFNVLRSLIYQLFCIFRY). Topologically, residues 143–758 (LYGASTKVIY…WSQDYGDITI (616 aa)) are cytoplasmic. Composition is skewed to polar residues over residues 169–180 (SKEQQQSLNHPS) and 189–198 (QEQQLSNQPQ). The interval 169-221 (SKEQQQSLNHPSELNRDSDGQEQQLSNQPQRFRPIQPLEMAANRPGGGYSPGP) is disordered. The sufficient for interaction with microtubules and microtubule severing stretch occupies residues 208-758 (MAANRPGGGY…WSQDYGDITI (551 aa)). Residues 233–308 (HRRAFEYISK…SMARDRLHFL (76 aa)) form the MIT domain. Disordered regions lie at residues 353–376 (RVRSSGYGPKATTGAQPTASGRKL) and 390–454 (NKSQ…ASTP). Polar residues-rich tracts occupy residues 390–406 (NKSQTLPRNLGSKTSVG) and 425–454 (QFSSGRNTPPQRSRTPINNNGPSGSGASTP). Residues 443-455 (NNGPSGSGASTPV) form a required for interaction with microtubules region. Position 523–530 (523–530 (GPPGNGKT)) interacts with ATP.

The protein belongs to the AAA ATPase family. Spastin subfamily. In terms of assembly, homohexamer. The homohexamer is stabilized by ATP-binding. The homohexamer may adopt a ring conformation through which microtubules pass prior to being severed. Interacts with microtubules. Interacts with atl; may be involved in microtubule dynamics.

The protein resides in the membrane. It is found in the cytoplasm. The protein localises to the cytoskeleton. It localises to the microtubule organizing center. Its subcellular location is the centrosome. The protein resides in the chromosome. It is found in the lipid droplet. The enzyme catalyses n ATP + n H2O + a microtubule = n ADP + n phosphate + (n+1) alpha/beta tubulin heterodimers.. ATP-dependent microtubule severing protein. Stimulates microtubule minus-end depolymerization and poleward microtubule flux in the mitotic spindle. Regulates microtubule stability in the neuromuscular junction synapse. Involved in lipid metabolism by regulating the size and distribution of lipid droplets. Involved in axon regeneration by regulating microtubule severing. This Drosophila yakuba (Fruit fly) protein is Spastin.